The sequence spans 85 residues: Large ribosomal subunit protein bL27 (85 aa).

The interval 1 to 20 is disordered; it reads MAHKKAAGSSRNGRDSNPKM.

The protein belongs to the bacterial ribosomal protein bL27 family.

In Psychrobacter arcticus (strain DSM 17307 / VKM B-2377 / 273-4), this protein is Large ribosomal subunit protein bL27.